A 484-amino-acid chain; its full sequence is Carbohydrate sulfotransferase 7 (484 aa).

The Cytoplasmic portion of the chain corresponds to 1–12 (MKGRRRRRREYC). Residues 13-33 (KFTLLLALYTLLLLLVPSVLD) traverse the membrane as a helical; Signal-anchor for type II membrane protein segment. The Lumenal portion of the chain corresponds to 34 to 484 (SHSEQDKGRN…PLETKANWAV (451 aa)). The disordered stretch occupies residues 71–90 (RSLAEGNPDRSPGSPGNLSA). The N-linked (GlcNAc...) asparagine glycan is linked to Asn-87. Residue 108-114 (WRTGSSF) participates in 3'-phosphoadenylyl sulfate binding. A glycan (N-linked (GlcNAc...) asparagine) is linked at Asn-184. 276-284 (RDPRAVHNS) is a binding site for 3'-phosphoadenylyl sulfate. A glycan (N-linked (GlcNAc...) asparagine) is linked at Asn-405. A Phosphoserine modification is found at Ser-460. Residues 460–473 (SGDERDRKTVREGE) are compositionally biased toward basic and acidic residues. The interval 460–484 (SGDERDRKTVREGETPLETKANWAV) is disordered.

Belongs to the sulfotransferase 1 family. Gal/GlcNAc/GalNAc subfamily. As to expression, widely expressed. Highly expressed in kidney. Expressed at lower level in heart, lung and liver.

Its subcellular location is the golgi apparatus membrane. It catalyses the reaction chondroitin beta-D-glucuronate + n 3'-phosphoadenylyl sulfate = chondroitin 6'-sulfate + n adenosine 3',5'-bisphosphate + n H(+). In terms of biological role, sulfotransferase that utilizes 3'-phospho-5'-adenylyl sulfate (PAPS) as sulfonate donor to catalyze the transfer of sulfate to position 6 of non-reducing N-acetylglucosamine (GlcNAc) residues. Preferentially acts on mannose-linked GlcNAc. Also able to catalyze the transfer of sulfate to position 6 of the N-acetylgalactosamine (GalNAc) residue of chondroitin. Also acts on core 2 mucin-type oligosaccharide and N-acetyllactosamine oligomer with a lower efficiency. Has weak or no activity toward keratan sulfate and oligosaccharides containing the Galbeta1-4GlcNAc. Catalyzes 6-O-sulfation of beta-benzyl GlcNAc but not alpha- or beta-benzyl GalNAc. The protein is Carbohydrate sulfotransferase 7 (Chst7) of Mus musculus (Mouse).